The primary structure comprises 379 residues: Anhydro-N-acetylmuramic acid kinase (379 aa).

9–16 contacts ATP; that stretch reads GTSADGVD.

Belongs to the anhydro-N-acetylmuramic acid kinase family.

It carries out the reaction 1,6-anhydro-N-acetyl-beta-muramate + ATP + H2O = N-acetyl-D-muramate 6-phosphate + ADP + H(+). The protein operates within amino-sugar metabolism; 1,6-anhydro-N-acetylmuramate degradation. It functions in the pathway cell wall biogenesis; peptidoglycan recycling. Functionally, catalyzes the specific phosphorylation of 1,6-anhydro-N-acetylmuramic acid (anhMurNAc) with the simultaneous cleavage of the 1,6-anhydro ring, generating MurNAc-6-P. Is required for the utilization of anhMurNAc either imported from the medium or derived from its own cell wall murein, and thus plays a role in cell wall recycling. In Prochlorococcus marinus (strain MIT 9313), this protein is Anhydro-N-acetylmuramic acid kinase.